The chain runs to 354 residues: Guanine nucleotide-binding protein G(i) subunit alpha (354 aa).

A lipid anchor (N-myristoyl glycine) is attached at glycine 2. Cysteine 3 carries S-palmitoyl cysteine lipidation. The 323-residue stretch at 32–354 (REVKLLLLGA…KNNLKDCGLF (323 aa)) folds into the G-alpha domain. The interval 35-48 (KLLLLGAGESGKST) is G1 motif. Residues 40–47 (GAGESGKS), 175–181 (LRTRVKT), 200–204 (DVGGQ), 269–272 (NKKD), and alanine 326 each bind GTP. 2 residues coordinate Mg(2+): serine 47 and threonine 181. Residues 173 to 181 (DVLRTRVKT) form a G2 motif region. The G3 motif stretch occupies residues 196–205 (FKMFDVGGQR). Residues 265-272 (ILFLNKKD) form a G4 motif region. The G5 motif stretch occupies residues 324–329 (TCATDT).

The protein belongs to the G-alpha family. G(i/o/t/z) subfamily. As to quaternary structure, g proteins are composed of 3 units; alpha, beta and gamma. The alpha chain contains the guanine nucleotide binding site.

In terms of biological role, guanine nucleotide-binding proteins (G proteins) are involved as modulators or transducers in various transmembrane signaling systems. In Planorbella trivolvis (Marsh rams-horn), this protein is Guanine nucleotide-binding protein G(i) subunit alpha.